A 534-amino-acid polypeptide reads, in one-letter code: GTPase Obg (534 aa).

In terms of domain architecture, Obg spans 2–159; that stretch reads ASFVDRVVLH…SDIVLELKSI (158 aa). Positions 63–82 are disordered; the sequence is APHRHASNGGQGMGDWRGGK. Residues 71–82 show a composition bias toward gly residues; it reads GGQGMGDWRGGK. Positions 160–343 constitute an OBG-type G domain; sequence ADIALVGFPS…LSFAMAELVT (184 aa). GTP contacts are provided by residues 166 to 173, 191 to 195, 212 to 215, 295 to 298, and 324 to 326; these read GFPSAGKS, FTTLI, DVPG, NKID, and SAS. The Mg(2+) site is built by Ser173 and Thr193. The OCT domain maps to 363–449; sequence PRAVNRKEFT…ENAVVFDWEP (87 aa). The tract at residues 456–534 is disordered; sequence ELLSGPRGTD…AASTDDGDAL (79 aa). 2 stretches are compositionally biased toward basic and acidic residues: residues 464–504 and 512–526; these read TDPR…ERKA and SARRDREAHESREAA.

It belongs to the TRAFAC class OBG-HflX-like GTPase superfamily. OBG GTPase family. Monomer. Mg(2+) serves as cofactor.

It is found in the cytoplasm. Its function is as follows. An essential GTPase which binds GTP, GDP and possibly (p)ppGpp with moderate affinity, with high nucleotide exchange rates and a fairly low GTP hydrolysis rate. Plays a role in control of the cell cycle, stress response, ribosome biogenesis and in those bacteria that undergo differentiation, in morphogenesis control. In Renibacterium salmoninarum (strain ATCC 33209 / DSM 20767 / JCM 11484 / NBRC 15589 / NCIMB 2235), this protein is GTPase Obg.